A 578-amino-acid chain; its full sequence is Matrix metalloproteinase-17 (578 aa).

Disordered regions lie at residues 1 to 22 and 107 to 133; these read MGRR…PGPG and PRCS…TKWS. The signal sequence occupies residues 1-39; the sequence is MGRRPRGPGSPRGPGPPRPGPGLPPLLLVLALAAHGGCA. The span at 11–22 shows a compositional bias: pro residues; sequence PRGPGPPRPGPG. The propeptide occupies 40 to 124; it reads APAPRAEDLS…PPGAQSRRKR (85 aa). The Cysteine switch motif lies at 107–114; it reads PRCSLPDL. Cys109 contacts Zn(2+). Asn136 is a glycosylation site (N-linked (GlcNAc...) asparagine). His247 is a Zn(2+) binding site. Glu248 is a catalytic residue. 2 residues coordinate Zn(2+): His251 and His257. Positions 301–334 are disordered; that stretch reads PTAQLDTPEPEEPPLLPEPPNNRSSTPPQKDVPH. Residue Asn322 is glycosylated (N-linked (GlcNAc...) asparagine). Hemopexin repeat units follow at residues 333–382, 386–432, 436–479, and 480–527; these read PHRC…WRGL, LDSV…SLPP, DAVF…WRGV, and PSML…WLVC. A disulfide bridge connects residues Cys336 and Cys527. Ser558 carries GPI-anchor amidated serine lipidation. Positions 559-578 are cleaved as a propeptide — removed in mature form; that stretch reads DAHRLALPSLLLLTPLLWGL.

This sequence belongs to the peptidase M10A family. It depends on Zn(2+) as a cofactor. Ca(2+) is required as a cofactor. Post-translationally, the precursor is cleaved by a furin endopeptidase. As to expression, expressed by monocytes and macrophages.

It localises to the cell membrane. It is found in the secreted. Its subcellular location is the extracellular space. The protein resides in the extracellular matrix. Its function is as follows. Endopeptidase that degrades various components of the extracellular matrix, such as fibrin. May be involved in the activation of membrane-bound precursors of growth factors or inflammatory mediators, such as tumor necrosis factor-alpha. May also be involved in tumoral process. Not obvious if able to proteolytically activate progelatinase A. Does not hydrolyze collagen types I, II, III, IV and V, gelatin, fibronectin, laminin, decorin nor alpha1-antitrypsin. The polypeptide is Matrix metalloproteinase-17 (Mmp17) (Mus musculus (Mouse)).